The chain runs to 148 residues: Large ribosomal subunit protein bL9 (148 aa).

This sequence belongs to the bacterial ribosomal protein bL9 family.

Binds to the 23S rRNA. This Listeria monocytogenes serotype 4b (strain CLIP80459) protein is Large ribosomal subunit protein bL9.